We begin with the raw amino-acid sequence, 401 residues long: Adenosine 3'-phospho 5'-phosphosulfate transporter 2 (401 aa).

Residues Asn-12 and Asn-71 are each glycosylated (N-linked (GlcNAc...) asparagine). 6 helical membrane passes run 78-98 (LTQF…YGYL), 111-131 (YGWY…LIEL), 147-167 (MIIA…LGYL), 170-190 (PTQV…GVFI), 200-220 (VSAA…DSTI), and 223-243 (NFNL…AVIG). Asn-254 carries N-linked (GlcNAc...) asparagine glycosylation. 4 consecutive transmembrane segments (helical) span residues 267-287 (IGFV…PAVT), 298-317 (GYAF…VLAL), 324-346 (LIAV…IFFA), and 349-369 (FTFQ…LNVY).

Belongs to the nucleotide-sugar transporter family. SLC35B subfamily.

The protein localises to the golgi apparatus membrane. The catalysed reaction is 3'-phosphoadenylyl sulfate(in) + adenosine 3',5'-bisphosphate(out) = 3'-phosphoadenylyl sulfate(out) + adenosine 3',5'-bisphosphate(in). In terms of biological role, probably functions as a 3'-phosphoadenylyl sulfate:adenosine 3',5'-bisphosphate antiporter at the Golgi membranes. Mediates the transport from the cytosol into the lumen of the Golgi of 3'-phosphoadenylyl sulfate/adenosine 3'-phospho 5'-phosphosulfate (PAPS), a universal sulfuryl donor for sulfation events that take place in that compartment. The protein is Adenosine 3'-phospho 5'-phosphosulfate transporter 2 of Pongo abelii (Sumatran orangutan).